The sequence spans 82 residues: Polyferredoxin protein FwdG (82 aa).

4Fe-4S ferredoxin-type domains lie at 4 to 33 (YELVVYPERCHGCGNCVVSCPVNAKHPETW) and 51 to 80 (VVTVVNQDLCGGCGACIEACPVNAIELVFK). Positions 13, 16, 19, 23, 60, 63, 66, and 70 each coordinate [4Fe-4S] cluster.

The cofactor is [4Fe-4S] cluster.

This is Polyferredoxin protein FwdG (fwdG) from Methanocaldococcus jannaschii (strain ATCC 43067 / DSM 2661 / JAL-1 / JCM 10045 / NBRC 100440) (Methanococcus jannaschii).